Here is an 89-residue protein sequence, read N- to C-terminus: MALDQQAKAKIRAEYATVEGDTGSPEVQVAVLTKRIADLTEHLKVHKHDHHSRRGLLLLVGRRRRLLNYVQKRDINRYRSLIERLGLRR.

Belongs to the universal ribosomal protein uS15 family. Part of the 30S ribosomal subunit. Forms a bridge to the 50S subunit in the 70S ribosome, contacting the 23S rRNA.

Functionally, one of the primary rRNA binding proteins, it binds directly to 16S rRNA where it helps nucleate assembly of the platform of the 30S subunit by binding and bridging several RNA helices of the 16S rRNA. Its function is as follows. Forms an intersubunit bridge (bridge B4) with the 23S rRNA of the 50S subunit in the ribosome. The chain is Small ribosomal subunit protein uS15 from Salinispora arenicola (strain CNS-205).